The following is a 513-amino-acid chain: Probable lipid II flippase MurJ (513 aa).

A run of 15 helical transmembrane segments spans residues 3–23 (ILKSLISLSLITFISRILGFM), 25–45 (DLLIAYSFGASGITDAFFLAF), 83–103 (FISNILGLMIIILSLFTAFGI), 133–153 (IMFPYIFFVSLGSLTGSILNA), 162–182 (YSSIFLNLSMIMFISFVTAYF), 186–206 (ILSLAWAVIVGGVFQILYQFP), 221–241 (ILNLGVLKFLKQIGIVALGMS), 245–265 (VSIIIATISSSFLISGSISWI), 271–291 (LVEFISGIFGVSLSTILLPLL), 313–333 (LVCILVIPSIIILFTLSESLI), 354–374 (IEFYSIGLLPFVLIKILLAGF), 382–402 (TPMKISIFILVLTQLMNIFFI), 405–425 (FQYTSFALAISLASWINFFLL), 441–461 (WLRFLLKIFAAAMVMLILLFI), and 481–501 (LFYICASSGGGYLFTLFCLGL).

Belongs to the MurJ/MviN family.

The protein localises to the cell inner membrane. The protein operates within cell wall biogenesis; peptidoglycan biosynthesis. Involved in peptidoglycan biosynthesis. Transports lipid-linked peptidoglycan precursors from the inner to the outer leaflet of the cytoplasmic membrane. The sequence is that of Probable lipid II flippase MurJ from Buchnera aphidicola subsp. Baizongia pistaciae (strain Bp).